Reading from the N-terminus, the 254-residue chain is tRNA 2'-phosphotransferase 1 (254 aa).

Met1 is modified (N-acetylmethionine). Disordered regions lie at residues 1 to 30 (MNSF…DRDV) and 225 to 254 (RKPL…MTQQ). Over residues 233–244 (NEEKEHQRDSKH) the composition is skewed to basic and acidic residues.

This sequence belongs to the KptA/TPT1 family.

The enzyme catalyses 2'-phospho-[ligated tRNA] + NAD(+) = mature tRNA + ADP-alpha-D-ribose 1'',2''-cyclic phosphate + nicotinamide. Its function is as follows. Catalyzes the last step of tRNA splicing, the transfer of the splice junction 2'-phosphate from ligated tRNA to NAD to produce ADP-ribose 1''-2'' cyclic phosphate. The sequence is that of tRNA 2'-phosphotransferase 1 (TRPT1) from Bos taurus (Bovine).